A 399-amino-acid chain; its full sequence is Bifunctional enzyme IspD/IspF (399 aa).

The segment at 1–235 is 2-C-methyl-D-erythritol 4-phosphate cytidylyltransferase; it reads METWALILAA…MVEQPKTTVP (235 aa). The 2-C-methyl-D-erythritol 2,4-cyclodiphosphate synthase stretch occupies residues 236–399; that stretch reads IVGYGYDVHK…IVIVTAIRIS (164 aa). A divalent metal cation-binding residues include Asp242 and His244. 4-CDP-2-C-methyl-D-erythritol 2-phosphate-binding positions include 242-244 and 275-276; these read DVH and HS. His283 provides a ligand contact to a divalent metal cation. Residues 297–299, 302–306, 373–376, and Phe380 contribute to the 4-CDP-2-C-methyl-D-erythritol 2-phosphate site; these read DIG, FPDSD, and TTEE.

This sequence in the N-terminal section; belongs to the IspD/TarI cytidylyltransferase family. IspD subfamily. It in the C-terminal section; belongs to the IspF family. A divalent metal cation is required as a cofactor.

It carries out the reaction 2-C-methyl-D-erythritol 4-phosphate + CTP + H(+) = 4-CDP-2-C-methyl-D-erythritol + diphosphate. The enzyme catalyses 4-CDP-2-C-methyl-D-erythritol 2-phosphate = 2-C-methyl-D-erythritol 2,4-cyclic diphosphate + CMP. It functions in the pathway isoprenoid biosynthesis; isopentenyl diphosphate biosynthesis via DXP pathway; isopentenyl diphosphate from 1-deoxy-D-xylulose 5-phosphate: step 2/6. The protein operates within isoprenoid biosynthesis; isopentenyl diphosphate biosynthesis via DXP pathway; isopentenyl diphosphate from 1-deoxy-D-xylulose 5-phosphate: step 4/6. In terms of biological role, bifunctional enzyme that catalyzes the formation of 4-diphosphocytidyl-2-C-methyl-D-erythritol from CTP and 2-C-methyl-D-erythritol 4-phosphate (MEP) (IspD), and catalyzes the conversion of 4-diphosphocytidyl-2-C-methyl-D-erythritol 2-phosphate (CDP-ME2P) to 2-C-methyl-D-erythritol 2,4-cyclodiphosphate (ME-CPP) with a corresponding release of cytidine 5-monophosphate (CMP) (IspF). The chain is Bifunctional enzyme IspD/IspF from Lawsonia intracellularis (strain PHE/MN1-00).